A 435-amino-acid polypeptide reads, in one-letter code: MAPFGRNLLKTRHKNRSPTKDMDSEEKEIVVWVCQEEKLVCGLTKRTTSADVIQALLEEHEATFGEKRFLLGKPSDYCIIEKWRGSERVLPPLTRILKLWKAWGDEQPNMQFVLVKADAFLPVPLWRTAEAKLVQNTEKLWELSPANYMKTLPPDKQKRIVRKTFRKLAKIKQDTVSHDRDNMETLVHLIISQDHTIHQQVKRMKELDLEIEKCEAKFHLDRVENDGENYVQDAYLMPSFSEVEQNLDLQYEENQTLEDLSESDGIEQLEERLKYYRILIDKLSAEIEKEVKSVCIDINEDAEGEAASELESSNLESVKCDLEKSMKAGLKIHSHLSGIQKEIKYSDSLLQMKAKEYELLAKEFNSLHISNKDGCQLKENRAKESEVPSSNGEIPPFTQRVFSNYTNDTDSDTGISSNHSQDSETTVGDVVLLST.

Residues Met-1 to Met-22 form a disordered region. One can recognise a Ras-associating domain in the interval Glu-25–Ala-119. A coiled-coil region spans residues His-195–Glu-290. Positions Asn-380–Thr-435 are disordered. Residues Arg-400–Thr-426 show a composition bias toward polar residues.

As to quaternary structure, interacts with PAM.

It is found in the endosome. In terms of biological role, may play a role in regulating vesicuar trafficking in cells. The protein is Ras association domain-containing protein 9 (RASSF9) of Homo sapiens (Human).